Here is a 145-residue protein sequence, read N- to C-terminus: Large ribosomal subunit protein uL13 (145 aa).

Belongs to the universal ribosomal protein uL13 family. As to quaternary structure, part of the 50S ribosomal subunit. Binds to Obg (AC P20964).

Functionally, this protein is one of the early assembly proteins of the 50S ribosomal subunit, although it is not seen to bind rRNA by itself. It is important during the early stages of 50S assembly. The protein is Large ribosomal subunit protein uL13 of Bacillus subtilis (strain 168).